The primary structure comprises 543 residues: Periplasmic oligopeptide-binding protein OppA (543 aa).

The N-terminal stretch at 1-26 (MSNITKKSLIAAGILTALIAASAATA) is a signal peptide. C297 and C443 are joined by a disulfide.

It belongs to the bacterial solute-binding protein 5 family. In terms of assembly, the complex is composed of two ATP-binding proteins (OppD and OppF), two transmembrane proteins (OppB and OppC) and a solute-binding protein (OppA).

The protein localises to the periplasm. Part of the ABC transporter complex OppABCDF involved in the uptake of oligopeptides, including the cell wall murein tripeptide L-alanyl-gamma-D-glutamyl-meso-diaminopimelate. Plays an important nutritional role and is involved in the recycling of cell wall peptides. Binds peptides containing from two to five amino acid residues regardless of their sequence. Also binds cell wall peptides, such as L-alanyl-gamma-D-glutamyl-meso-diaminopimelate. The polypeptide is Periplasmic oligopeptide-binding protein OppA (Salmonella typhimurium (strain LT2 / SGSC1412 / ATCC 700720)).